Here is a 314-residue protein sequence, read N- to C-terminus: L-lactate dehydrogenase (314 aa).

NAD(+) is bound by residues Val-17, Asp-38, Lys-43, Tyr-69, and 83–84; that span reads GA. Residues Gln-86 and Arg-92 each contribute to the substrate site. NAD(+) contacts are provided by residues Ser-105, 122 to 124, and Ser-147; that span reads ASN. A substrate-binding site is contributed by 124–127; the sequence is NPVD. 152 to 155 is a binding site for substrate; that stretch reads DSAR. 2 residues coordinate beta-D-fructose 1,6-bisphosphate: Arg-157 and His-172. The active-site Proton acceptor is His-179. Residue Tyr-223 is modified to Phosphotyrosine. Residue Thr-232 participates in substrate binding.

This sequence belongs to the LDH/MDH superfamily. LDH family. As to quaternary structure, homotetramer.

It localises to the cytoplasm. It carries out the reaction (S)-lactate + NAD(+) = pyruvate + NADH + H(+). It participates in fermentation; pyruvate fermentation to lactate; (S)-lactate from pyruvate: step 1/1. Allosterically activated by fructose 1,6-bisphosphate (FBP). Catalyzes the conversion of lactate to pyruvate. This chain is L-lactate dehydrogenase, found in Corynebacterium glutamicum (strain ATCC 13032 / DSM 20300 / JCM 1318 / BCRC 11384 / CCUG 27702 / LMG 3730 / NBRC 12168 / NCIMB 10025 / NRRL B-2784 / 534).